Consider the following 352-residue polypeptide: Fc receptor-like A (352 aa).

Positions 1–30 are cleaved as a signal peptide; that stretch reads MKLSCTLTQWALYVCPAVLLATQMLLAASS. Residues 46-65 are disordered; it reads CQAAAEEDEGDEDDGDMTQS. The span at 50-61 shows a compositional bias: acidic residues; that stretch reads AEEDEGDEDDGD. Ig-like C2-type domains follow at residues 80–169 and 182–260; these read PFHL…EAAS and PVLK…RQIS. 2 cysteine pairs are disulfide-bonded: cysteine 109-cysteine 153 and cysteine 202-cysteine 250. The segment at 275-310 is disordered; the sequence is KPTASETPPTEALGPLPPPPASSAEQPRFSSPDPHL.

In terms of assembly, monomer or homodimer; disulfide-linked. Highly expressed in spleen. Expressed in immature B-cell and B-cell lines.

Its subcellular location is the cytoplasm. May be implicated in B-cell differentiation and lymphomagenesis. This is Fc receptor-like A (Fcrla) from Mus musculus (Mouse).